A 119-amino-acid chain; its full sequence is Large ribosomal subunit protein uL24 (119 aa).

It belongs to the universal ribosomal protein uL24 family. Part of the 50S ribosomal subunit.

Its function is as follows. One of two assembly initiator proteins, it binds directly to the 5'-end of the 23S rRNA, where it nucleates assembly of the 50S subunit. In terms of biological role, located at the polypeptide exit tunnel on the outside of the subunit. The protein is Large ribosomal subunit protein uL24 of Methanococcus maripaludis (strain C5 / ATCC BAA-1333).